The sequence spans 64 residues: Large ribosomal subunit protein bL35 (64 aa).

Over residues 1 to 24 (MPKMKSHRGACKRFKKTASGKVKR) the composition is skewed to basic residues. The interval 1–64 (MPKMKSHRGA…EKQIKRMILA (64 aa)) is disordered. Basic and acidic residues predominate over residues 25-35 (ERMYGSHNLEK). Over residues 36–45 (KNRKRTRRLH) the composition is skewed to basic residues.

Belongs to the bacterial ribosomal protein bL35 family.

This is Large ribosomal subunit protein bL35 from Prosthecochloris aestuarii (strain DSM 271 / SK 413).